Here is a 130-residue protein sequence, read N- to C-terminus: Succinate dehydrogenase cytochrome b556 subunit (130 aa).

The Cytoplasmic segment spans residues 1–26 (MADVNRGNRPLSPHLQVYRLPLAAIT). A helical membrane pass occupies residues 27-52 (SIMTRITGHALVAGIVLITWWLVAAV). Over 53 to 68 (TSPGAFACADWVVRSW) the chain is Periplasmic. The helical transmembrane segment at 69 to 89 (LGFIILTGSMWALWYHLLAGL) threads the bilayer. Histidine 84 is a binding site for heme. Residues 90 to 109 (RHLFYDAGYGLEIEQAHKSS) lie on the Cytoplasmic side of the membrane. Residues 110–130 (QALIAGSVVLAVLTLIVFFVF) traverse the membrane as a helical segment.

It belongs to the cytochrome b560 family. Part of an enzyme complex containing four subunits: a flavoprotein, an iron-sulfur protein, plus two membrane-anchoring proteins, SdhC and SdhD. The complex can form homotrimers. The cofactor is heme.

It is found in the cell inner membrane. Its pathway is carbohydrate metabolism; tricarboxylic acid cycle. Functionally, membrane-anchoring subunit of succinate dehydrogenase (SDH). The chain is Succinate dehydrogenase cytochrome b556 subunit (sdhC) from Paracoccus denitrificans.